We begin with the raw amino-acid sequence, 151 residues long: U1 small nuclear ribonucleoprotein C (151 aa).

The Matrin-type zinc-finger motif lies at 4–36; that stretch reads YYCDYCDTYLTHDSPSVRKTHCTGRKHKDNVKF.

This sequence belongs to the U1 small nuclear ribonucleoprotein C family. U1 snRNP is composed of the 7 core Sm proteins B/B', D1, D2, D3, E, F and G that assemble in a heptameric protein ring on the Sm site of the small nuclear RNA to form the core snRNP, and at least 3 U1 snRNP-specific proteins U1-70K, U1-A and U1-C. U1-C interacts with U1 snRNA and the 5' splice-site region of the pre-mRNA.

The protein resides in the nucleus. Component of the spliceosomal U1 snRNP, which is essential for recognition of the pre-mRNA 5' splice-site and the subsequent assembly of the spliceosome. U1-C is directly involved in initial 5' splice-site recognition for both constitutive and regulated alternative splicing. The interaction with the 5' splice-site seems to precede base-pairing between the pre-mRNA and the U1 snRNA. Stimulates commitment or early (E) complex formation by stabilizing the base pairing of the 5' end of the U1 snRNA and the 5' splice-site region. This Anopheles darlingi (Mosquito) protein is U1 small nuclear ribonucleoprotein C.